Reading from the N-terminus, the 211-residue chain is Imidazole glycerol phosphate synthase subunit HisH (211 aa).

Residues 1-206 (MIGIIDYGRG…GKWVNEDATV (206 aa)) enclose the Glutamine amidotransferase type-1 domain. Residue cysteine 79 is the Nucleophile of the active site. Active-site residues include histidine 181 and glutamate 183.

As to quaternary structure, heterodimer of HisH and HisF.

It is found in the cytoplasm. The catalysed reaction is 5-[(5-phospho-1-deoxy-D-ribulos-1-ylimino)methylamino]-1-(5-phospho-beta-D-ribosyl)imidazole-4-carboxamide + L-glutamine = D-erythro-1-(imidazol-4-yl)glycerol 3-phosphate + 5-amino-1-(5-phospho-beta-D-ribosyl)imidazole-4-carboxamide + L-glutamate + H(+). The enzyme catalyses L-glutamine + H2O = L-glutamate + NH4(+). It functions in the pathway amino-acid biosynthesis; L-histidine biosynthesis; L-histidine from 5-phospho-alpha-D-ribose 1-diphosphate: step 5/9. Its function is as follows. IGPS catalyzes the conversion of PRFAR and glutamine to IGP, AICAR and glutamate. The HisH subunit catalyzes the hydrolysis of glutamine to glutamate and ammonia as part of the synthesis of IGP and AICAR. The resulting ammonia molecule is channeled to the active site of HisF. The polypeptide is Imidazole glycerol phosphate synthase subunit HisH (Desulfitobacterium hafniense (strain DSM 10664 / DCB-2)).